Here is a 171-residue protein sequence, read N- to C-terminus: N5-carboxyaminoimidazole ribonucleotide mutase (171 aa).

3 residues coordinate substrate: serine 13, aspartate 16, and arginine 43.

Belongs to the AIR carboxylase family. Class I subfamily.

It carries out the reaction 5-carboxyamino-1-(5-phospho-D-ribosyl)imidazole + H(+) = 5-amino-1-(5-phospho-D-ribosyl)imidazole-4-carboxylate. The protein operates within purine metabolism; IMP biosynthesis via de novo pathway; 5-amino-1-(5-phospho-D-ribosyl)imidazole-4-carboxylate from 5-amino-1-(5-phospho-D-ribosyl)imidazole (N5-CAIR route): step 2/2. Functionally, catalyzes the conversion of N5-carboxyaminoimidazole ribonucleotide (N5-CAIR) to 4-carboxy-5-aminoimidazole ribonucleotide (CAIR). This is N5-carboxyaminoimidazole ribonucleotide mutase from Mycobacterium leprae (strain TN).